Here is a 476-residue protein sequence, read N- to C-terminus: 3-isopropylmalate dehydratase large subunit (476 aa).

3 residues coordinate [4Fe-4S] cluster: cysteine 353, cysteine 413, and cysteine 416.

It belongs to the aconitase/IPM isomerase family. LeuC type 1 subfamily. Heterodimer of LeuC and LeuD. The cofactor is [4Fe-4S] cluster.

It catalyses the reaction (2R,3S)-3-isopropylmalate = (2S)-2-isopropylmalate. Its pathway is amino-acid biosynthesis; L-leucine biosynthesis; L-leucine from 3-methyl-2-oxobutanoate: step 2/4. In terms of biological role, catalyzes the isomerization between 2-isopropylmalate and 3-isopropylmalate, via the formation of 2-isopropylmaleate. This is 3-isopropylmalate dehydratase large subunit from Yersinia pseudotuberculosis serotype IB (strain PB1/+).